Here is a 340-residue protein sequence, read N- to C-terminus: MRPILLSGHERSLNQIKFNRDGDLLFSVAKDKIVCAWWSANGERLGTYSGHQGAIWTVDVSPNTVLLATGSADNTVRLWNVKTGECVKVWDFPTAVKRVEFNPDGSRLLAVTEKRMGFLGTIAVLDISYGDSQGGALENQADEPSLRITCTESKATVAGWSYLGKYIIAGHEDGSVSQYDGKTGEQLENVQAHEFDHQINDIQFSQDRTYFITASKDKSAKLISSRNLAILKTYVADTPLNSATITPKKDYVILGGGQAAMDVTTTSARQGKFEARFYHKVFEDEIGRVRGHFGPLNTVDVHPNGTAYASGGEDGYVRVHHFDKPYFDFMYEVEREQLRK.

5 WD repeats span residues 8–47 (GHER…RLGT), 50–91 (GHQG…KVWD), 150–189 (CTES…QLEN), 194–233 (EFDH…ILKT), and 291–330 (GHFG…FDFM).

It belongs to the eIF-3 subunit I family. As to quaternary structure, component of the eukaryotic translation initiation factor 3 (eIF-3) complex.

Its subcellular location is the cytoplasm. Functionally, component of the eukaryotic translation initiation factor 3 (eIF-3) complex, which is involved in protein synthesis of a specialized repertoire of mRNAs and, together with other initiation factors, stimulates binding of mRNA and methionyl-tRNAi to the 40S ribosome. The eIF-3 complex specifically targets and initiates translation of a subset of mRNAs involved in cell proliferation. The protein is Eukaryotic translation initiation factor 3 subunit I (tif34) of Neosartorya fischeri (strain ATCC 1020 / DSM 3700 / CBS 544.65 / FGSC A1164 / JCM 1740 / NRRL 181 / WB 181) (Aspergillus fischerianus).